Consider the following 370-residue polypeptide: Cell division protein DivIB (370 aa).

A disordered region spans residues 1–65; sequence MKKKKDEELT…SNKKGTKRIV (65 aa). Residues 1–74 lie on the Cytoplasmic side of the membrane; sequence MKKKKDEELT…VKEQRLSRQK (74 aa). 2 stretches are compositionally biased toward basic residues: residues 25-34 and 47-63; these read SRFKRKRKAT and RNNR…GTKR. A helical transmembrane segment spans residues 75–95; that stretch reads LGILIGSTLIVIALFFGYFYS. Over 96–370 the chain is Extracellular; the sequence is SISRVQKFSV…STVNTQQDID (275 aa). A POTRA domain is found at 98-169; it reads SRVQKFSVSG…GKVKIKVKEN (72 aa). The interval 295 to 370 is disordered; it reads SGWTDEAKAA…STVNTQQDID (76 aa). 2 stretches are compositionally biased toward low complexity: residues 304 to 314 and 327 to 342; these read ASESSKSAESS and SESA…STET. The segment covering 356–370 has biased composition (polar residues); the sequence is SSNAESTVNTQQDID.

The protein belongs to the FtsQ/DivIB family. DivIB subfamily.

It localises to the cell membrane. Its function is as follows. Cell division protein that may be involved in stabilizing or promoting the assembly of the division complex. The polypeptide is Cell division protein DivIB (Pediococcus pentosaceus (strain ATCC 25745 / CCUG 21536 / LMG 10740 / 183-1w)).